Consider the following 241-residue polypeptide: Carboxy-S-adenosyl-L-methionine synthase (241 aa).

S-adenosyl-L-methionine contacts are provided by residues Tyr38, 63-65 (GCS), 88-89 (DN), 116-117 (DI), Asn131, and Arg198.

It belongs to the class I-like SAM-binding methyltransferase superfamily. Cx-SAM synthase family. As to quaternary structure, homodimer.

It catalyses the reaction prephenate + S-adenosyl-L-methionine = carboxy-S-adenosyl-L-methionine + 3-phenylpyruvate + H2O. In terms of biological role, catalyzes the conversion of S-adenosyl-L-methionine (SAM) to carboxy-S-adenosyl-L-methionine (Cx-SAM). The polypeptide is Carboxy-S-adenosyl-L-methionine synthase (Pasteurella multocida (strain Pm70)).